The primary structure comprises 120 residues: Cytochrome b5 (120 aa).

The Cytochrome b5 heme-binding domain maps to 2 to 78 (PKVYSYQEVA…LKGLYIGDVD (77 aa)). H37 and H61 together coordinate heme. A helical membrane pass occupies residues 98–118 (GSGTLVVILAILMLGVAYYLL).

This sequence belongs to the cytochrome b5 family.

The protein resides in the endoplasmic reticulum membrane. It is found in the microsome membrane. In terms of biological role, membrane bound hemoprotein which function as an electron carrier for several membrane bound oxygenases. It plays a role in fatty-acid desaturation and is also involved in several steps of the sterol biosynthesis pathway, particularly in the 4-demethylation of the 4,4'-dimethyl zymosterol. In Saccharomyces cerevisiae (strain ATCC 204508 / S288c) (Baker's yeast), this protein is Cytochrome b5 (CYB5).